A 42-amino-acid polypeptide reads, in one-letter code: Serine protease inhibitor 8 (42 aa).

The protein belongs to the protease inhibitor I3 (leguminous Kunitz-type inhibitor) family. Cortex of potato tuber.

In terms of biological role, potent inhibitor of animal pancreatic trypsin (serine protease). This Solanum tuberosum (Potato) protein is Serine protease inhibitor 8.